A 483-amino-acid polypeptide reads, in one-letter code: MSAQINNIRPEFDREIVDIVDYVMNYEISSKVAYDTAHYCLLDTLGCGLEALEYPACKKLLGPIVPGTVVPNGVRVPGTQFQLDPVQAAFNIGAMIRWLDFNDTWLAAEWGHPSDNLGGILATADWLSRNAVASGKAPLTMKQVLTAMIKAHEIQGCIALENSFNRVGLDHVLLVKVASTAVVAEMLGLTREEILNAVSLAWVDGQSLRTYRHAPNTGTRKSWAAGDATSRAVRLALMAKTGEMGYPSALTAPVWGFYDVSFKGESFRFQRPYGSYVMENVLFKISFPAEFHSQTAVEAAMTLYEQMQAAGKTAADIEKVTIRTHEACIRIIDKKGPLNNPADRDHCIQYMVAIPLLFGRLTAADYEDNVAQDKRIDALREKINCFEDPAFTADYHDPEKRAIANAITLEFTDGTRFEEVVVEYPIGHARRRQDGIPKLVDKFKINLARQFPTRQQQRILEVSLDRARLEQMPVNEYLDLYVI.

Belongs to the PrpD family. Monomer.

It catalyses the reaction (2S,3S)-2-methylcitrate = 2-methyl-cis-aconitate + H2O. The catalysed reaction is citrate = D-threo-isocitrate. It participates in organic acid metabolism; propanoate degradation. It functions in the pathway carbohydrate metabolism; tricarboxylic acid cycle; isocitrate from oxaloacetate: step 2/2. Functionally, involved in the catabolism of short chain fatty acids (SCFA) via the tricarboxylic acid (TCA)(acetyl degradation route) and via the 2-methylcitrate cycle I (propionate degradation route). Catalyzes the dehydration of 2-methylcitrate (2-MC) to yield the cis isomer of 2-methyl-aconitate. It is also able to catalyze the dehydration of citrate and the hydration of cis-aconitate at a lower rate. Due to its broad substrate specificity, it seems to be responsible for the residual aconitase activity of the acnAB-null mutant. This Escherichia coli (strain K12) protein is 2-methylcitrate dehydratase.